The chain runs to 444 residues: MQVTTEAVSGVARRLNVSVPTSRINEQFEARLKRTAKTVKINGFRPGKVPANVVRREYGASIYQEVVNDIIRDSVFEAIQQEKINAVGTPNIEKVEHKEDALVFEATVEVYPEVEVKAFDGLEVERKTAEIKDADVDTMIENLQKQRQTWAVTKGMAKKDMQVTFDFEGSIDGEKFEGGSAEDFKLVLGSGRMIPGFEDGIIGMKAGEEKVIDVTFPEDYQAENLAGKAAQFKITVKQVEKPKLPEIDAEFLKIFGVSEEEGIEKLKADVRKNMEREVRNGLRNQVKQAAFDALVAANEIEVPAAMVAQEIDRQRQQMVQQFTQQFGGAGAQSFDKSMLPDELFKEQAERSVKLGVLVSKVLADAKLEVDQARVDAYIDDMASSYEDPTEVIEYFKNDAQQRAQIEAVVLEDQVVDHILASAKVTDKAVSYEDLLKEQQARRMG.

Positions 160–245 (DMQVTFDFEG…VKQVEKPKLP (86 aa)) constitute a PPIase FKBP-type domain.

This sequence belongs to the FKBP-type PPIase family. Tig subfamily.

It localises to the cytoplasm. It catalyses the reaction [protein]-peptidylproline (omega=180) = [protein]-peptidylproline (omega=0). Involved in protein export. Acts as a chaperone by maintaining the newly synthesized protein in an open conformation. Functions as a peptidyl-prolyl cis-trans isomerase. The protein is Trigger factor of Acinetobacter baumannii (strain SDF).